Consider the following 201-residue polypeptide: Small ribosomal subunit protein uS4c (201 aa).

The region spanning 89–152 is the S4 RNA-binding domain; that stretch reads MRLDNILFRL…NSRTLVQNLL (64 aa).

The protein belongs to the universal ribosomal protein uS4 family. Part of the 30S ribosomal subunit. Contacts protein S5. The interaction surface between S4 and S5 is involved in control of translational fidelity.

It localises to the plastid. The protein resides in the chloroplast. One of the primary rRNA binding proteins, it binds directly to 16S rRNA where it nucleates assembly of the body of the 30S subunit. In terms of biological role, with S5 and S12 plays an important role in translational accuracy. This chain is Small ribosomal subunit protein uS4c (rps4), found in Capsella bursa-pastoris (Shepherd's purse).